The sequence spans 289 residues: Bifunctional aminodeoxychorismate lyase / D-amino acid transaminase (289 aa).

Residue Arg50 participates in pyridoxal 5'-phosphate binding. Position 149 is an N6-(pyridoxal phosphate)lysine (Lys149). Pyridoxal 5'-phosphate is bound by residues Tyr153, Thr216, and Thr217. Ser252 is a binding site for 2-oxoglutarate. Ser253 provides a ligand contact to pyridoxal 5'-phosphate. The 2-oxoglutarate site is built by Met254 and Thr255.

This sequence belongs to the class-IV pyridoxal-phosphate-dependent aminotransferase family. Homodimer. The cofactor is pyridoxal 5'-phosphate.

The catalysed reaction is 4-amino-4-deoxychorismate = 4-aminobenzoate + pyruvate + H(+). It catalyses the reaction D-alanine + 2-oxoglutarate = D-glutamate + pyruvate. The protein operates within cofactor biosynthesis; tetrahydrofolate biosynthesis; 4-aminobenzoate from chorismate: step 2/2. It participates in cell wall biogenesis; peptidoglycan biosynthesis. In terms of biological role, bifunctional enzyme that catalyzes two enzymatic reactions in biochemically unrelated pathways: acts as an aminodeoxychorismate (ADC) lyase (ADCL) in folate biosynthesis, converting 4-amino-4-deoxychorismate (ADC) to 4-aminobenzoate (PABA), and as a D-amino acid transaminase (DAAT) in peptidoglycan (PG) biosynthesis. DAAT activity is strictly restricted to D-alanine and D-glutamate. May function as a metabolic toggle that alternates between ADCL and DAAT activity, prioritizing the former over the latter in response to substrate accumulation. Bifunctionality of this enzyme provides a failsafe mechanism for a metabolic coupling between nucleic acid and cell wall biosynthesis that appears to ensure prioritization of PABA production over D-alanine/D-glutamate biosynthesis. The sequence is that of Bifunctional aminodeoxychorismate lyase / D-amino acid transaminase from Mycobacterium tuberculosis (strain ATCC 25618 / H37Rv).